Reading from the N-terminus, the 156-residue chain is Large ribosomal subunit protein uL15 (156 aa).

The tract at residues 14–35 (GSRTHGWGRVGQHRKSGSSGGK) is disordered.

This sequence belongs to the universal ribosomal protein uL15 family. As to quaternary structure, part of the 50S ribosomal subunit.

Its function is as follows. Binds to the 23S rRNA. This Pyrobaculum islandicum (strain DSM 4184 / JCM 9189 / GEO3) protein is Large ribosomal subunit protein uL15.